We begin with the raw amino-acid sequence, 383 residues long: Prokineticin receptor 2 (383 aa).

Over 1–54 the chain is Extracellular; it reads MGDQNGNTSFAPDLNPPQDHVSLLPLNYSYGDYDIPLDDDEDVTKTQTFFAAKI. Residues N7 and N27 are each glycosylated (N-linked (GlcNAc...) asparagine). The helical transmembrane segment at 55-75 threads the bilayer; that stretch reads VIGVALAGIMLVCGVGNFVFI. Over 76 to 89 the chain is Cytoplasmic; it reads AALARYKKLRNLTN. Residues 90-110 traverse the membrane as a helical segment; it reads LLIANLAISDFLVAIVCCPFE. Topologically, residues 111–136 are extracellular; that stretch reads MDYYVVRQLSWEHGHVLCASVNYLRT. An intrachain disulfide couples C128 to C207. The chain crosses the membrane as a helical span at residues 137–157; sequence VSLYVSTNALLAIAIDRYLAI. Residues 158 to 170 lie on the Cytoplasmic side of the membrane; the sequence is VHPLKRMNYQTAS. A helical transmembrane segment spans residues 171-191; the sequence is FLIALVWMVSILIAIPSAYFT. Residues 192–222 are Extracellular-facing; it reads TETILVIVKNQEKLFCGQIWPVDQQLYYKSY. Residues 223–243 traverse the membrane as a helical segment; sequence FLFVFGLEFVGPVVTMTLCYA. The Cytoplasmic portion of the chain corresponds to 244–272; the sequence is RISQELWFKAVPGFQTEQIRKRLRCRRKT. A helical membrane pass occupies residues 273-293; sequence VLLLMGILTAYVLCWAPFYGF. Topologically, residues 294–312 are extracellular; the sequence is TIVRDFFPTLVVKEKHYLT. Residues 313–333 form a helical membrane-spanning segment; sequence AFYVVECIAMSNSMINTICFV. The Cytoplasmic segment spans residues 334 to 383; the sequence is TVKNNTMKYFKKMLLLHWRPSHYGSKSSADLDLKTSGVPATEEVDCIRLK.

This sequence belongs to the G-protein coupled receptor 1 family. As to quaternary structure, homodimer. Abundantly expressed in the CNS and reproductive organs with the highest levels in the cerebrum, cerebellum, testis and ovary.

The protein localises to the cell membrane. Functionally, receptor for prokineticin 2. Exclusively coupled to the G(q) subclass of heteromeric G proteins. Activation leads to mobilization of calcium, stimulation of phosphoinositide turnover and activation of p44/p42 mitogen-activated protein kinase. This chain is Prokineticin receptor 2 (Prokr2), found in Rattus norvegicus (Rat).